The chain runs to 95 residues: Aspartyl/glutamyl-tRNA(Asn/Gln) amidotransferase subunit C (95 aa).

The protein belongs to the GatC family. As to quaternary structure, heterotrimer of A, B and C subunits.

The catalysed reaction is L-glutamyl-tRNA(Gln) + L-glutamine + ATP + H2O = L-glutaminyl-tRNA(Gln) + L-glutamate + ADP + phosphate + H(+). It carries out the reaction L-aspartyl-tRNA(Asn) + L-glutamine + ATP + H2O = L-asparaginyl-tRNA(Asn) + L-glutamate + ADP + phosphate + 2 H(+). Allows the formation of correctly charged Asn-tRNA(Asn) or Gln-tRNA(Gln) through the transamidation of misacylated Asp-tRNA(Asn) or Glu-tRNA(Gln) in organisms which lack either or both of asparaginyl-tRNA or glutaminyl-tRNA synthetases. The reaction takes place in the presence of glutamine and ATP through an activated phospho-Asp-tRNA(Asn) or phospho-Glu-tRNA(Gln). This chain is Aspartyl/glutamyl-tRNA(Asn/Gln) amidotransferase subunit C, found in Pelodictyon phaeoclathratiforme (strain DSM 5477 / BU-1).